Reading from the N-terminus, the 92-residue chain is Small ribosomal subunit protein uS19 (92 aa).

Belongs to the universal ribosomal protein uS19 family.

Protein S19 forms a complex with S13 that binds strongly to the 16S ribosomal RNA. This chain is Small ribosomal subunit protein uS19, found in Paracoccus denitrificans (strain Pd 1222).